The following is a 342-amino-acid chain: S-adenosylmethionine:tRNA ribosyltransferase-isomerase (342 aa).

Belongs to the QueA family. Monomer.

The protein localises to the cytoplasm. It catalyses the reaction 7-aminomethyl-7-carbaguanosine(34) in tRNA + S-adenosyl-L-methionine = epoxyqueuosine(34) in tRNA + adenine + L-methionine + 2 H(+). The protein operates within tRNA modification; tRNA-queuosine biosynthesis. In terms of biological role, transfers and isomerizes the ribose moiety from AdoMet to the 7-aminomethyl group of 7-deazaguanine (preQ1-tRNA) to give epoxyqueuosine (oQ-tRNA). This Campylobacter jejuni (strain RM1221) protein is S-adenosylmethionine:tRNA ribosyltransferase-isomerase.